The chain runs to 218 residues: Ribose-5-phosphate isomerase A (218 aa).

Substrate is bound by residues 28–31, 81–84, and 94–97; these read TGST, DGAD, and KGGG. Catalysis depends on Glu-103, which acts as the Proton acceptor. Lys-121 serves as a coordination point for substrate.

Belongs to the ribose 5-phosphate isomerase family. In terms of assembly, homodimer.

It catalyses the reaction aldehydo-D-ribose 5-phosphate = D-ribulose 5-phosphate. It participates in carbohydrate degradation; pentose phosphate pathway; D-ribose 5-phosphate from D-ribulose 5-phosphate (non-oxidative stage): step 1/1. In terms of biological role, catalyzes the reversible conversion of ribose-5-phosphate to ribulose 5-phosphate. The polypeptide is Ribose-5-phosphate isomerase A (Vibrio vulnificus (strain CMCP6)).